Here is a 378-residue protein sequence, read N- to C-terminus: Secreted LysM effector ldpA (378 aa).

An N-terminal signal peptide occupies residues 1–19 (MMKSIRFLASALALCLVDA). Low complexity predominate over residues 118–131 (WTPPTTTTRSTSSS). A disordered region spans residues 118 to 139 (WTPPTTTTRSTSSSAGNGVTTP). The LysM 1 domain occupies 152-198 (RFYLVVSGDSCYDIAAAQGISLDNFYTWNPAVGSSCGGLWPDYYVCV). A disordered region spans residues 208–230 (TTTTTTTPTTTSTTTTTAGNGVT). 2 consecutive LysM domains span residues 245 to 291 (KFYQ…YVCV) and 330 to 376 (KFYL…YVCV).

It belongs to the secreted LysM effector family.

It localises to the secreted. Its subcellular location is the cell wall. The protein localises to the extracellular space. It is found in the extracellular matrix. Cell wall chitin of A.fumigatus recruits lung eosinophils during infection and ldpA might have a role in sequestration of chitin and act as triggers of host immunity to dampen host defense. This Aspergillus fumigatus (strain ATCC MYA-4609 / CBS 101355 / FGSC A1100 / Af293) (Neosartorya fumigata) protein is Secreted LysM effector ldpA.